The following is a 576-amino-acid chain: Trehalase 2 (576 aa).

Belongs to the glycosyl hydrolase 15 family.

The catalysed reaction is alpha,alpha-trehalose + H2O = alpha-D-glucose + beta-D-glucose. The protein operates within glycan degradation; trehalose degradation; D-glucose from alpha,alpha-trehalose: step 1/1. Functionally, catalyzes the hydrolysis of alpha,alpha-trehalose into two molecules of D-glucose. In Sulfolobus acidocaldarius (strain ATCC 33909 / DSM 639 / JCM 8929 / NBRC 15157 / NCIMB 11770), this protein is Trehalase 2 (treH2).